Reading from the N-terminus, the 497-residue chain is Lysine--tRNA ligase (497 aa).

Mg(2+)-binding residues include E409 and E416.

The protein belongs to the class-II aminoacyl-tRNA synthetase family. Homodimer. Requires Mg(2+) as cofactor.

It is found in the cytoplasm. It carries out the reaction tRNA(Lys) + L-lysine + ATP = L-lysyl-tRNA(Lys) + AMP + diphosphate. This chain is Lysine--tRNA ligase, found in Streptococcus pyogenes serotype M3 (strain ATCC BAA-595 / MGAS315).